The following is a 371-amino-acid chain: 4-hydroxyprotoasukamycin monooxygenase (371 aa).

This sequence belongs to the bacterial luciferase oxidoreductase family. Requires FMN as cofactor.

It catalyses the reaction 4-hydroxyprotoasukamycin + NADH + O2 + H(+) = asukamycin + NAD(+) + H2O. Its pathway is antibiotic biosynthesis. In terms of biological role, involved in the biosynthesis of the antibiotic asukamycin. Catalyzes the epoxidation of 4-hydroxyprotoasukamycin to the final product, asukamycin. Can also convert some 4-hydroxyprotoasukamycin derivatives to their asukamycin derivatives, but cannot use protoasukamycin as substrate. Can also use NADPH, but catalytic efficiency is 20-fold higher with NADH. In Streptomyces nodosus subsp. asukaensis, this protein is 4-hydroxyprotoasukamycin monooxygenase.